Here is a 526-residue protein sequence, read N- to C-terminus: MSLNNIIKNALVSLSDKTDLLKISKILAEKKINLFCTGGTADVLKKNKIPVLEISDYTNFPEIMNGRLKTLHPKIIGGILGRREKDQKIMKLHNLIPIDIVIVNFYPFEKIQNRKEFTIEEIIDNIDIGGPTLVRAAAKNYKDVIVIVDLSDFTSCIQLINTNTVSLETRFDLATKAFKYTALYEEIISKYFLKKNPYRKKHQKNIFPNEFQLNFIKKQDLRYGENQHQKSSFYIEKEILKSGTISSSNQIQGKNLSYNNICDADIALECVKEFSKPTCVIVKHGNPCGVSESNSLIKAYFSAYNADPISAFGGIIAFNCLLDLDTAQEIVKKQFVEVIIAPEIDEMAVKILKRKKNIRLLICGKIEKNKKGLDFKRITNGLLIQEYDCDEINAKNFDFVTNRLPTEKELEDAIFSWKVAKFVKSNAIVYSLNKTTIGIGAGQTSRIDATKLANLKVKDRNHNNTTGATMASDAFFPFRDGIDNAALIGISCIIQPGGSIRDKEVIESANEHNISMIFTKKRHFKH.

The 148-residue stretch at 1–148 (MSLNNIIKNA…KNYKDVIVIV (148 aa)) folds into the MGS-like domain.

Belongs to the PurH family.

The enzyme catalyses (6R)-10-formyltetrahydrofolate + 5-amino-1-(5-phospho-beta-D-ribosyl)imidazole-4-carboxamide = 5-formamido-1-(5-phospho-D-ribosyl)imidazole-4-carboxamide + (6S)-5,6,7,8-tetrahydrofolate. It catalyses the reaction IMP + H2O = 5-formamido-1-(5-phospho-D-ribosyl)imidazole-4-carboxamide. It functions in the pathway purine metabolism; IMP biosynthesis via de novo pathway; 5-formamido-1-(5-phospho-D-ribosyl)imidazole-4-carboxamide from 5-amino-1-(5-phospho-D-ribosyl)imidazole-4-carboxamide (10-formyl THF route): step 1/1. It participates in purine metabolism; IMP biosynthesis via de novo pathway; IMP from 5-formamido-1-(5-phospho-D-ribosyl)imidazole-4-carboxamide: step 1/1. This is Bifunctional purine biosynthesis protein PurH from Buchnera aphidicola subsp. Schizaphis graminum (strain Sg).